The sequence spans 110 residues: Neural hemoglobin (110 aa).

Positions 2 to 110 constitute a Globin domain; the sequence is VNWAAVVDDF…HAIDDILSHL (109 aa). His-70 provides a ligand contact to heme.

The protein belongs to the globin family. In terms of assembly, homotetramer. Self-associates in the deoxy state. Seems to dissociate upon oxygenation.

Its function is as follows. Acts as an oxygen store capable of sustaining neuronal activity in an anoxic environment for 5 to 30 minutes. The polypeptide is Neural hemoglobin (Cerebratulus lacteus (Milky ribbon worm)).